A 201-amino-acid polypeptide reads, in one-letter code: Coat protein (201 aa).

This sequence belongs to the potexvirus capsid protein family.

It is found in the virion. Its function is as follows. Required for genome encapsidation. Forms ribonucleoprotein complexes along with TGB1 helicase and viral RNA. The chain is Coat protein from Lilium formosanum.